The primary structure comprises 87 residues: Mu-theraphotoxin-Cg1a (87 aa).

The signal sequence occupies residues 1-21 (MKVLVLITLAVLGAMFVWTSA). Positions 22-50 (AELEERGSDQRDSPAWVKSMERIFQSEER) are excised as a propeptide. 3 disulfides stabilise this stretch: cysteine 52/cysteine 66, cysteine 59/cysteine 71, and cysteine 65/cysteine 79.

It belongs to the neurotoxin 10 (Hwtx-1) family. 39 (Jztx-34) subfamily. Expressed by the venom gland.

The protein localises to the secreted. In terms of biological role, potent and selective inhibitor of hNav1.7/SCN9A (IC(50)=610 nM). Also shows a weak activity towards Nav1.3/SCN3A (IC(50)=7950 nM). In addition, inhibits voltage-gated potassium channels (Kv) in rat DRG neurons. It does not alter the voltage dependence of activation, but it causes a small hyperpolarizing shift in the steady-state inactivations of Nav1.7/SNC9A. Chimera experiments show that the toxin binds to the DIIS3-S4 linker (site 4) of Nav1.7/SCN9A, whereas Nav1.7/SCN9A Asp-827 residue is shown by substitution experiments to be critical for its sensitivity. The toxin traps the domain II voltage sensor in the closed configuration, and not in an outward position. In vivo, shows analgesic activity in three rodent pain models (formalin-induced, acid-induced, and thermal). The polypeptide is Mu-theraphotoxin-Cg1a (Chilobrachys guangxiensis (Chinese earth tiger tarantula)).